The following is a 792-amino-acid chain: Ribonucleoside-diphosphate reductase large subunit (792 aa).

Residues 1 to 92 form the ATP-cone domain; it reads MHVIKRDGRQ…VSNLHKETKK (92 aa). Residues 5–6, 11–17, Thr-53, and Asp-57 contribute to the ATP site; these read KR and ERVMFDK. An N6-acetyllysine modification is found at Lys-17. GDP contacts are provided by Ser-202 and Ser-217. Cys-218 and Cys-444 are joined by a disulfide. DTTP-binding positions include 226–228, Lys-243, Arg-256, and 263–264; these read DSI and AG. Lys-376 is modified (N6-acetyllysine). Asn-427 contributes to the GDP binding site. Catalysis depends on Asn-427, which acts as the Proton acceptor. Cys-429 acts as the Cysteine radical intermediate in catalysis. Residues Glu-431 and 604 to 607 contribute to the GDP site; that span reads TAST. Catalysis depends on Glu-431, which acts as the Proton acceptor. At Thr-751 the chain carries Phosphothreonine.

It belongs to the ribonucleoside diphosphate reductase large chain family. In terms of assembly, heterodimer of a large and a small subunit. Heterodimer with small subunit RRM2 or RRM2B. The heterodimer with RRM2 has higher catalytic activity than the heterodimer with RRM2B. Interacts with AHCYL1 which inhibits its activity.

It localises to the cytoplasm. It catalyses the reaction a 2'-deoxyribonucleoside 5'-diphosphate + [thioredoxin]-disulfide + H2O = a ribonucleoside 5'-diphosphate + [thioredoxin]-dithiol. Under complex allosteric control mediated by deoxynucleoside triphosphates and ATP binding to separate specificity and activation sites on the M1 subunit. The type of nucleotide bound at the specificity site determines substrate preference. It seems probable that ATP makes the enzyme reduce CDP and UDP, dGTP favors ADP reduction and dTTP favors GDP reduction. Stimulated by ATP and inhibited by dATP binding to the activity site, the dATP inhibition is mediated by AHCYL1 which stabilizes dATP in the site. Functionally, provides the precursors necessary for DNA synthesis. Catalyzes the biosynthesis of deoxyribonucleotides from the corresponding ribonucleotides. The polypeptide is Ribonucleoside-diphosphate reductase large subunit (RRM1) (Homo sapiens (Human)).